The chain runs to 301 residues: Acetylglutamate kinase (301 aa).

Residues 64–65 (GG), R86, and N181 contribute to the substrate site.

The protein belongs to the acetylglutamate kinase family. ArgB subfamily.

The protein resides in the cytoplasm. It carries out the reaction N-acetyl-L-glutamate + ATP = N-acetyl-L-glutamyl 5-phosphate + ADP. The protein operates within amino-acid biosynthesis; L-arginine biosynthesis; N(2)-acetyl-L-ornithine from L-glutamate: step 2/4. Its function is as follows. Catalyzes the ATP-dependent phosphorylation of N-acetyl-L-glutamate. This chain is Acetylglutamate kinase, found in Aliarcobacter butzleri (strain RM4018) (Arcobacter butzleri).